A 138-amino-acid polypeptide reads, in one-letter code: Small ribosomal subunit protein uS11c (138 aa).

A disordered region spans residues 1–21 (MAKSISKIGSRKNARIGSRKQ). Positions 9–21 (GSRKNARIGSRKQ) are enriched in basic residues.

Belongs to the universal ribosomal protein uS11 family. Part of the 30S ribosomal subunit.

It is found in the plastid. The protein localises to the chloroplast. This chain is Small ribosomal subunit protein uS11c, found in Cicer arietinum (Chickpea).